The following is a 223-amino-acid chain: Ribonuclease T (223 aa).

Residues 20–194 (VVIDVETAGF…YDTERTAELF (175 aa)) enclose the Exonuclease domain. 4 residues coordinate Mg(2+): Asp-23, Glu-25, His-181, and Asp-186. His-181 serves as the catalytic Proton donor/acceptor.

The protein belongs to the RNase T family. In terms of assembly, homodimer. The cofactor is Mg(2+).

Functionally, trims short 3' overhangs of a variety of RNA species, leaving a one or two nucleotide 3' overhang. Responsible for the end-turnover of tRNA: specifically removes the terminal AMP residue from uncharged tRNA (tRNA-C-C-A). Also appears to be involved in tRNA biosynthesis. The polypeptide is Ribonuclease T (Shewanella baltica (strain OS185)).